The sequence spans 503 residues: MILEMLNPMHYNLTSMVPEVMPVATLPILLLTGFLFFVWNHEETSSIPGPGYCMGIGPLISHLRFLWMGLGSACNYYNKMYGEFVRVWISGEETLVISKSSSTFHIMKHDHYSSRFGSTFGLQYMGMHENGVIFNNNPAVWKALRPFFVKALSGPSLARMVTVCVESVNNHLDRLDEVTNALGHVNVLTLMRRTMLDASNTLFLRIPLDEKNIVLKIQGYFDAWQALLIKPNIFFKISWLSRKHQKSIKELRDAVGILAEEKRHRIFTAEKLEDHVDFATDLILAEKRGELTKENVNQCILEMMIAAPDTLSVTVFFMLCLIAQHPKVEEALMKEIQTVLGERDLKNDDMQKLKVMENFINESMRYQPVVDIVMRKALEDDVIDGYPVKKGTNIILNIGRMHKLEFFPKPNEFTLENFEKNVPYRYFQPFGFGPRSCAGKFIAMVMMKVMLVSLLRRFHVKTLQGNCLENMQKTNDLALHPDESRSLPAMIFTPRNSEKCLEH.

Transmembrane regions (helical) follow at residues 19 to 39 (EVMPVATLPILLLTGFLFFVW) and 51 to 71 (GYCMGIGPLISHLRFLWMGLG). The segment at 294–324 (ENVNQCILEMMIAAPDTLSVTVFFMLCLIAQ) is substrate-binding pocket. Residues Asp309 and Met374 each coordinate substrate. Cys437 is a heme binding site.

This sequence belongs to the cytochrome P450 family. Heme is required as a cofactor. As to expression, expressed in placenta. Highly expressed in follicles (0 hour:hCG), followed by a drop (12-24 hour:hCG) and by an increase (30-39 hour:hCG). Highly expressed in corpora lutea. Also expressed in granulosa cell layer. Not expressed in theca interna.

The protein localises to the endoplasmic reticulum membrane. It localises to the microsome membrane. The catalysed reaction is testosterone + 3 reduced [NADPH--hemoprotein reductase] + 3 O2 = 17beta-estradiol + formate + 3 oxidized [NADPH--hemoprotein reductase] + 4 H2O + 4 H(+). The enzyme catalyses androst-4-ene-3,17-dione + 3 reduced [NADPH--hemoprotein reductase] + 3 O2 = estrone + formate + 3 oxidized [NADPH--hemoprotein reductase] + 4 H2O + 4 H(+). It carries out the reaction androst-4-ene-3,17-dione + reduced [NADPH--hemoprotein reductase] + O2 = 19-hydroxyandrost-4-ene-3,17-dione + oxidized [NADPH--hemoprotein reductase] + H2O + H(+). It catalyses the reaction 19-hydroxyandrost-4-ene-3,17-dione + reduced [NADPH--hemoprotein reductase] + O2 = 19-oxo-androst-4-ene-3,17-dione + oxidized [NADPH--hemoprotein reductase] + 2 H2O + H(+). The catalysed reaction is 19-oxo-androst-4-ene-3,17-dione + reduced [NADPH--hemoprotein reductase] + O2 = estrone + formate + oxidized [NADPH--hemoprotein reductase] + H2O + 2 H(+). The enzyme catalyses estrone + reduced [NADPH--hemoprotein reductase] + O2 = 2-hydroxyestrone + oxidized [NADPH--hemoprotein reductase] + H2O + H(+). It carries out the reaction 17beta-hydroxy-5alpha-androstan-3-one + reduced [NADPH--hemoprotein reductase] + O2 = 17beta,19-dihydroxy-3-oxo-5alpha-androstanone + oxidized [NADPH--hemoprotein reductase] + H2O + H(+). It catalyses the reaction 17beta,19-dihydroxy-3-oxo-5alpha-androstanone + reduced [NADPH--hemoprotein reductase] + O2 = 17beta-hydroxy-3,19-dioxo-5alpha-androstanone + oxidized [NADPH--hemoprotein reductase] + 2 H2O + H(+). The catalysed reaction is 17beta-hydroxy-3,19-dioxo-5alpha-androstanone + reduced [NADPH--hemoprotein reductase] + O2 = 17beta-hydroxy-3-oxo-19-nor-5alpha-androst-1-ene + formate + oxidized [NADPH--hemoprotein reductase] + H2O + 2 H(+). It functions in the pathway steroid hormone biosynthesis. In terms of biological role, a cytochrome P450 monooxygenase that catalyzes the conversion of C19 androgens, androst-4-ene-3,17-dione (androstenedione) and testosterone to the C18 estrogens, estrone and estradiol, respectively. Catalyzes three successive oxidations of C19 androgens: two conventional oxidations at C19 yielding 19-hydroxy and 19-oxo/19-aldehyde derivatives, followed by a third oxidative aromatization step that involves C1-beta hydrogen abstraction combined with cleavage of the C10-C19 bond to yield a phenolic A ring and formic acid. Alternatively, the third oxidative reaction yields a 19-norsteroid and formic acid. Converts dihydrotestosterone to delta1,10-dehydro 19-nordihydrotestosterone and may play a role in homeostasis of this potent androgen. Also displays 2-hydroxylase activity toward estrone. Mechanistically, uses molecular oxygen inserting one oxygen atom into a substrate, and reducing the second into a water molecule, with two electrons provided by NADPH via cytochrome P450 reductase (CPR; NADPH-ferrihemoprotein reductase). The sequence is that of Aromatase (CYP19A1) from Equus caballus (Horse).